A 320-amino-acid polypeptide reads, in one-letter code: Glyoxylate/hydroxypyruvate reductase B (320 aa).

Active-site residues include Arg233 and Glu262. His281 functions as the Proton donor in the catalytic mechanism.

Belongs to the D-isomer specific 2-hydroxyacid dehydrogenase family. GhrB subfamily. In terms of assembly, homodimer.

It is found in the cytoplasm. The catalysed reaction is glycolate + NADP(+) = glyoxylate + NADPH + H(+). It carries out the reaction (R)-glycerate + NAD(+) = 3-hydroxypyruvate + NADH + H(+). The enzyme catalyses (R)-glycerate + NADP(+) = 3-hydroxypyruvate + NADPH + H(+). Functionally, catalyzes the NADPH-dependent reduction of glyoxylate and hydroxypyruvate into glycolate and glycerate, respectively. The polypeptide is Glyoxylate/hydroxypyruvate reductase B (Pectobacterium atrosepticum (strain SCRI 1043 / ATCC BAA-672) (Erwinia carotovora subsp. atroseptica)).